Consider the following 292-residue polypeptide: Formamidopyrimidine-DNA glycosylase (292 aa).

P2 acts as the Schiff-base intermediate with DNA in catalysis. The active-site Proton donor is E3. The active-site Proton donor; for beta-elimination activity is the K58. DNA contacts are provided by H98, R128, and R173. Residues 258-292 form an FPG-type zinc finger; sequence LVYDRAGQPCRVCATPVRQIVQGQRSTFYCPNCQH. R282 serves as the catalytic Proton donor; for delta-elimination activity.

Belongs to the FPG family. Monomer. Requires Zn(2+) as cofactor.

It catalyses the reaction Hydrolysis of DNA containing ring-opened 7-methylguanine residues, releasing 2,6-diamino-4-hydroxy-5-(N-methyl)formamidopyrimidine.. The catalysed reaction is 2'-deoxyribonucleotide-(2'-deoxyribose 5'-phosphate)-2'-deoxyribonucleotide-DNA = a 3'-end 2'-deoxyribonucleotide-(2,3-dehydro-2,3-deoxyribose 5'-phosphate)-DNA + a 5'-end 5'-phospho-2'-deoxyribonucleoside-DNA + H(+). Involved in base excision repair of DNA damaged by oxidation or by mutagenic agents. Acts as a DNA glycosylase that recognizes and removes damaged bases. Has a preference for oxidized purines, such as 7,8-dihydro-8-oxoguanine (8-oxoG). Has AP (apurinic/apyrimidinic) lyase activity and introduces nicks in the DNA strand. Cleaves the DNA backbone by beta-delta elimination to generate a single-strand break at the site of the removed base with both 3'- and 5'-phosphates. The polypeptide is Formamidopyrimidine-DNA glycosylase (Cupriavidus necator (strain ATCC 17699 / DSM 428 / KCTC 22496 / NCIMB 10442 / H16 / Stanier 337) (Ralstonia eutropha)).